Consider the following 340-residue polypeptide: MNCVVCSGRATNRNYGAMSCFACKMFFHRTVYKNLLFRCKRIQNCTIHFKIFPKCRACRFQKCLIVGMTLAPLNDGIVSIGNQSDYSYAKLLDDLKFKNDKNYSHFVNFYSLEDPSLADILKDRGIMKLVKRTPKTLNDVDQWSIMMAYSRISYFLDFNFIRDLDSSDKNTLFKYNISRAGCLALAKCAFNENKPKLTFPNDVDAFPSEMYNLCGSSTAVLNQVSGQVIAKFVELKIKDEEYLLLILVMFCNPSISNDFSDKTKLALSSHQQAFCSALFRYCQINYSKSAPTRFTELLSLFGIVNKSVDNMNNLSMMLQFCEPKFQFKRIMQDLFSNSLL.

The segment at residues 1–75 (MNCVVCSGRA…VGMTLAPLND (75 aa)) is a DNA-binding region (nuclear receptor). NR C4-type zinc fingers lie at residues 3–23 (CVVCSGRATNRNYGAMSCFAC) and 39–58 (CKRIQNCTIHFKIFPKCRAC). Residues 98-337 (KNDKNYSHFV…KRIMQDLFSN (240 aa)) form the NR LBD domain.

The protein belongs to the nuclear hormone receptor family.

Its subcellular location is the nucleus. Functionally, orphan nuclear receptor. The protein is Nuclear hormone receptor family member nhr-197 (nhr-197) of Caenorhabditis elegans.